A 505-amino-acid chain; its full sequence is Lysine--tRNA ligase (505 aa).

Glutamate 415 and glutamate 422 together coordinate Mg(2+).

The protein belongs to the class-II aminoacyl-tRNA synthetase family. In terms of assembly, homodimer. Requires Mg(2+) as cofactor.

The protein localises to the cytoplasm. The catalysed reaction is tRNA(Lys) + L-lysine + ATP = L-lysyl-tRNA(Lys) + AMP + diphosphate. In Salmonella typhimurium (strain LT2 / SGSC1412 / ATCC 700720), this protein is Lysine--tRNA ligase (lysS).